The following is a 420-amino-acid chain: G2/mitotic-specific cyclin-A (420 aa).

A disordered region spans residues 64-93; sequence VQGSRIQPTRAAKEKLKPPQNISDSQLVND. Residues 83–93 are compositionally biased toward polar residues; it reads QNISDSQLVND.

Belongs to the cyclin family. Cyclin AB subfamily.

Functionally, essential for the control of the cell cycle at the G2/M (mitosis) transition. Interacts with the CDC2 and CDK2 protein kinases to form MPF. G2/M cyclins accumulate steadily during G2 and are abruptly destroyed at mitosis. The protein is G2/mitotic-specific cyclin-A of Hydra viridissima (Green hydra).